Reading from the N-terminus, the 506-residue chain is Spindle pole body protein CSA6 (506 aa).

Disordered stretches follow at residues 18–121 (SPIK…PNEN), 252–276 (EKHNNPQDSPPKVKIATPDPEVETQ), 329–429 (PSSP…YSIR), and 447–470 (KNDQKDTNSPEESNTDGKEEEEKV). Residues 38–48 (IDLRDYMDRQK) are compositionally biased toward basic and acidic residues. Residues 50–59 (SRNYSDSEYT) are compositionally biased toward polar residues. A compositionally biased stretch (basic and acidic residues) spans 63–72 (IKREKPETKQ). Positions 94 to 119 (PTKNYSQHVMQERSAPNSPQKKSLPN) are enriched in polar residues. Composition is skewed to polar residues over residues 330 to 353 (SSPNHQTQPVFQSTPQSKVESVNL) and 361 to 389 (QPSHVSSNSQQNLSDKSRTSIPSRDNPSP). Composition is skewed to basic and acidic residues over residues 412–422 (EWTREREERDG) and 461–470 (TDGKEEEEKV).

It localises to the cytoplasm. It is found in the cytoskeleton. The protein resides in the microtubule organizing center. The protein localises to the spindle pole body. Functionally, plays a role in mitotic spindle pole body organization, possibly at the point of spindle pole body separation. Required for mitotic exit. This is Spindle pole body protein CSA6 from Candida tropicalis (strain ATCC MYA-3404 / T1) (Yeast).